Here is a 101-residue protein sequence, read N- to C-terminus: Osteocalcin (101 aa).

The N-terminal stretch at 1–19 (MKLAILTVLLLGAAVLCLG) is a signal peptide. A propeptide spanning residues 20-52 (SKDADHSNSVGESHSSEAFISRQESASFARLKR) is cleaved from the precursor. The region spanning 53–99 (SYGNNVGQGAAVGSPLESQREVCELNPDCDELADHIGFQEAYRRFYG) is the Gla domain. Positions 69, 73, 76, and 82 each coordinate Ca(2+). 4-carboxyglutamate occurs at positions 69, 73, and 76. An intrachain disulfide couples Cys-75 to Cys-81.

Belongs to the osteocalcin/matrix Gla protein family. In terms of processing, gamma-carboxyglutamate residues are formed by vitamin K dependent carboxylation by GGCX. These residues are essential for the binding of calcium.

Its subcellular location is the secreted. Functionally, the carboxylated form is one of the main organic components of the bone matrix, which constitutes 1-2% of the total bone protein. The carboxylated form binds strongly to apatite and calcium. The chain is Osteocalcin (bglap) from Xenopus laevis (African clawed frog).